The primary structure comprises 328 residues: Sterol-4-alpha-carboxylate 3-dehydrogenase, decarboxylating (328 aa).

Tyr-145 (proton acceptor) is an active-site residue. Lys-149 provides a ligand contact to NAD(+). A helical transmembrane segment spans residues 259 to 279 (LHMVLPTPIALSLVWIMALIW).

It belongs to the 3-beta-HSD family. As to quaternary structure, homodimer.

It localises to the endoplasmic reticulum membrane. Its subcellular location is the lipid droplet. It carries out the reaction a 3beta-hydroxysteroid-4alpha-carboxylate + NADP(+) = a 3-oxosteroid + CO2 + NADPH. The enzyme catalyses a 3beta-hydroxysteroid-4alpha-carboxylate + NAD(+) = a 3-oxosteroid + CO2 + NADH. It participates in steroid biosynthesis; zymosterol biosynthesis; zymosterol from lanosterol: step 4/6. In terms of biological role, catalyzes the NAD(P)(+)-dependent oxidative decarboxylation of the C4 methyl groups of 4-alpha-carboxysterols in post-squalene cholesterol biosynthesis. The chain is Sterol-4-alpha-carboxylate 3-dehydrogenase, decarboxylating (nsdhl) from Dictyostelium discoideum (Social amoeba).